Reading from the N-terminus, the 318-residue chain is Ankyrin repeat domain-containing protein 1 (318 aa).

Residues 37–77 are a coiled coil; the sequence is ALEKQEDLKTTSKSLIELEEEKQSKEKQLKSELLKKKLEER. ANK repeat units lie at residues 151–180, 184–213, 217–246, 250–279, and 283–314; these read YKRT…NIEF, LEST…AINA, LLST…DLNA, EGDT…NLNI, and AGKT…KNSH.

The protein resides in the nucleus. Its function is as follows. May act as a nuclear transcription factor that negatively regulates the expression of cardiac genes. The chain is Ankyrin repeat domain-containing protein 1 (ankrd1) from Xenopus laevis (African clawed frog).